The sequence spans 390 residues: Glucose-fructose oxidoreductase domain-containing protein 1 (390 aa).

Residues Met-1–Leu-21 form the signal peptide. N-linked (GlcNAc...) asparagine glycosylation is found at Asn-161, Asn-270, and Asn-354.

The protein belongs to the Gfo/Idh/MocA family. As to quaternary structure, homodimer.

The protein resides in the secreted. Functionally, probably catalytically inactive enzyme. Does not bind NAD or NADP. This Xenopus tropicalis (Western clawed frog) protein is Glucose-fructose oxidoreductase domain-containing protein 1 (gfod1).